A 271-amino-acid chain; its full sequence is Putative cysteine protease YopT-like blr2140 (271 aa).

The disordered stretch occupies residues 1 to 81; it reads MYDRIGGSST…STSSPESPAT (81 aa). A compositionally biased stretch (polar residues) spans 7–29; the sequence is GSSTRTSQTDEPSQSVDSGSFTE. The span at 65–81 shows a compositional bias: low complexity; it reads TSSASEPSTSSPESPAT. Residue cysteine 100 is part of the active site. The segment at 114–136 is disordered; it reads SPSTRMSALTPGSQTHASAAERQ. Residues histidine 213 and aspartate 228 contribute to the active site.

Belongs to the peptidase C58 family.

Its function is as follows. Potential cysteine protease, which may play a central role after invasion of host cell. In Bradyrhizobium diazoefficiens (strain JCM 10833 / BCRC 13528 / IAM 13628 / NBRC 14792 / USDA 110), this protein is Putative cysteine protease YopT-like blr2140.